Consider the following 123-residue polypeptide: Aberrant microtubules protein 1 (123 aa).

Its function is as follows. Required for normal microtubule organization. This is Aberrant microtubules protein 1 (ABM1) from Saccharomyces cerevisiae (strain ATCC 204508 / S288c) (Baker's yeast).